Here is a 399-residue protein sequence, read N- to C-terminus: Paraneoplastic antigen-like protein 6A (399 aa).

It belongs to the PNMA family. In terms of tissue distribution, expressed in the brain.

This is Paraneoplastic antigen-like protein 6A from Homo sapiens (Human).